Here is a 360-residue protein sequence, read N- to C-terminus: Fructose-bisphosphate aldolase 1 (360 aa).

Residue Ser63 coordinates D-glyceraldehyde 3-phosphate. Catalysis depends on Asp110, which acts as the Proton donor. Residues His111, Asp145, Glu175, and His227 each contribute to the Zn(2+) site. Gly228 contributes to the dihydroxyacetone phosphate binding site. His266 contacts Zn(2+). 267–269 (GGS) lines the dihydroxyacetone phosphate pocket.

The protein belongs to the class II fructose-bisphosphate aldolase family. Homodimer. The cofactor is Zn(2+).

It catalyses the reaction beta-D-fructose 1,6-bisphosphate = D-glyceraldehyde 3-phosphate + dihydroxyacetone phosphate. It participates in carbohydrate degradation; glycolysis; D-glyceraldehyde 3-phosphate and glycerone phosphate from D-glucose: step 4/4. Its function is as follows. Catalyzes the aldol condensation of dihydroxyacetone phosphate (DHAP or glycerone-phosphate) with glyceraldehyde 3-phosphate (G3P) to form fructose 1,6-bisphosphate (FBP) in gluconeogenesis and the reverse reaction in glycolysis. The sequence is that of Fructose-bisphosphate aldolase 1 (FBA1) from Paracoccidioides lutzii (strain ATCC MYA-826 / Pb01) (Paracoccidioides brasiliensis).